We begin with the raw amino-acid sequence, 564 residues long: Proline--tRNA ligase (564 aa).

Belongs to the class-II aminoacyl-tRNA synthetase family. ProS type 1 subfamily. As to quaternary structure, homodimer.

It is found in the cytoplasm. It catalyses the reaction tRNA(Pro) + L-proline + ATP = L-prolyl-tRNA(Pro) + AMP + diphosphate. In terms of biological role, catalyzes the attachment of proline to tRNA(Pro) in a two-step reaction: proline is first activated by ATP to form Pro-AMP and then transferred to the acceptor end of tRNA(Pro). As ProRS can inadvertently accommodate and process non-cognate amino acids such as alanine and cysteine, to avoid such errors it has two additional distinct editing activities against alanine. One activity is designated as 'pretransfer' editing and involves the tRNA(Pro)-independent hydrolysis of activated Ala-AMP. The other activity is designated 'posttransfer' editing and involves deacylation of mischarged Ala-tRNA(Pro). The misacylated Cys-tRNA(Pro) is not edited by ProRS. This is Proline--tRNA ligase from Xylella fastidiosa (strain 9a5c).